Consider the following 1576-residue polypeptide: DExH-box ATP-dependent RNA helicase DExH2 (1576 aa).

The R3H domain occupies 15–78 (EATGAWATKV…ERRLSLFKGD (64 aa)). The 170-residue stretch at 227-396 (ISAVESNQVV…FGGCPVVRVP (170 aa)) folds into the Helicase ATP-binding domain. 240-247 (GETGCGKT) contacts ATP. A DEIH box motif is present at residues 343-346 (DEIH). The 175-residue stretch at 561–735 (LIVKLMKKIC…ELCLQVKMLD (175 aa)) folds into the Helicase C-terminal domain. Disordered regions lie at residues 1137–1165 (ATSP…MGSK), 1177–1223 (MEES…SLNN), and 1260–1576 (DMGN…PSDQ). A compositionally biased stretch (polar residues) spans 1281-1301 (PNSANSMDLGNMEENTPSDLA). Over residues 1305–1319 (KKKEPKSVSKLDLGS) the composition is skewed to basic and acidic residues. The PH1 signature appears at 1349-1360 (KQPEKKRSRSKK). The segment covering 1352 to 1363 (EKKRSRSKKRKS) has biased composition (basic residues). Over residues 1381–1412 (ANENEQTEPKSANNLDLGNMKENTPSDLANEN) the composition is skewed to polar residues. The short motif at 1454–1465 (KQPKKKRSRSKK) is the PH2 element. Residues 1455–1467 (QPKKKRSRSKKCK) are compositionally biased toward basic residues. Over residues 1490-1508 (EQKDPESVNRLDPGKEKES) the composition is skewed to basic and acidic residues. A compositionally biased stretch (polar residues) spans 1509-1524 (IPSNLVSGNEQPDSNT). Residues 1528 to 1537 (KKPKKKKRKL) are compositionally biased toward basic residues. The Nuclear localization signal signature appears at 1530-1537 (PKKKKRKL). Polar residues predominate over residues 1540 to 1562 (NFDSVNNMEEKMPSTNVLSQGNK).

It belongs to the DExH box helicase family. As to quaternary structure, homodimer.

The protein resides in the nucleus. It carries out the reaction ATP + H2O = ADP + phosphate + H(+). Its function is as follows. May function as an ATP-dependent RNA/DNA helicase. Binds DNA in vitro in a non-specific manner. This Arabidopsis thaliana (Mouse-ear cress) protein is DExH-box ATP-dependent RNA helicase DExH2.